The primary structure comprises 262 residues: Tryptophan synthase alpha chain (262 aa).

Active-site proton acceptor residues include E49 and D60.

Belongs to the TrpA family. As to quaternary structure, tetramer of two alpha and two beta chains.

It carries out the reaction (1S,2R)-1-C-(indol-3-yl)glycerol 3-phosphate + L-serine = D-glyceraldehyde 3-phosphate + L-tryptophan + H2O. The protein operates within amino-acid biosynthesis; L-tryptophan biosynthesis; L-tryptophan from chorismate: step 5/5. The alpha subunit is responsible for the aldol cleavage of indoleglycerol phosphate to indole and glyceraldehyde 3-phosphate. In Thermoanaerobacter pseudethanolicus (strain ATCC 33223 / 39E) (Clostridium thermohydrosulfuricum), this protein is Tryptophan synthase alpha chain.